Reading from the N-terminus, the 397-residue chain is CCA-adding enzyme (397 aa).

2 residues coordinate ATP: Gly26 and Arg29. Residues Gly26 and Arg29 each coordinate CTP. 2 residues coordinate Mg(2+): Asp39 and Asp41. Residues Arg110, Asp153, Arg156, Arg159, and Arg162 each coordinate ATP. Positions 110, 153, 156, 159, and 162 each coordinate CTP.

The protein belongs to the tRNA nucleotidyltransferase/poly(A) polymerase family. Bacterial CCA-adding enzyme type 3 subfamily. Homodimer. Mg(2+) serves as cofactor.

The catalysed reaction is a tRNA precursor + 2 CTP + ATP = a tRNA with a 3' CCA end + 3 diphosphate. The enzyme catalyses a tRNA with a 3' CCA end + 2 CTP + ATP = a tRNA with a 3' CCACCA end + 3 diphosphate. Its function is as follows. Catalyzes the addition and repair of the essential 3'-terminal CCA sequence in tRNAs without using a nucleic acid template. Adds these three nucleotides in the order of C, C, and A to the tRNA nucleotide-73, using CTP and ATP as substrates and producing inorganic pyrophosphate. tRNA 3'-terminal CCA addition is required both for tRNA processing and repair. Also involved in tRNA surveillance by mediating tandem CCA addition to generate a CCACCA at the 3' terminus of unstable tRNAs. While stable tRNAs receive only 3'-terminal CCA, unstable tRNAs are marked with CCACCA and rapidly degraded. The chain is CCA-adding enzyme from Bacillus cereus (strain B4264).